The primary structure comprises 253 residues: Triosephosphate isomerase (253 aa).

12 to 14 (NWK) contacts substrate. The active-site Electrophile is the H100. E170 acts as the Proton acceptor in catalysis. Substrate is bound by residues G176, S215, and 236–237 (GG).

It belongs to the triosephosphate isomerase family. As to quaternary structure, homodimer.

It is found in the cytoplasm. The catalysed reaction is D-glyceraldehyde 3-phosphate = dihydroxyacetone phosphate. It participates in carbohydrate biosynthesis; gluconeogenesis. Its pathway is carbohydrate degradation; glycolysis; D-glyceraldehyde 3-phosphate from glycerone phosphate: step 1/1. In terms of biological role, involved in the gluconeogenesis. Catalyzes stereospecifically the conversion of dihydroxyacetone phosphate (DHAP) to D-glyceraldehyde-3-phosphate (G3P). This Rhodopseudomonas palustris (strain BisA53) protein is Triosephosphate isomerase.